The chain runs to 585 residues: Chaperonin GroEL, chloroplastic (585 aa).

Residues 55–58 (TLGP), 113–117 (DGTTT), Gly-442, 507–509 (NAA), and Asp-523 each bind ATP.

It belongs to the chaperonin (HSP60) family. In terms of assembly, forms a cylinder of 14 subunits composed of two heptameric rings stacked back-to-back. Interacts with the co-chaperonin GroES.

Its subcellular location is the plastid. The protein resides in the chloroplast. It carries out the reaction ATP + H2O + a folded polypeptide = ADP + phosphate + an unfolded polypeptide.. Together with its co-chaperonin GroES, plays an essential role in assisting protein folding. The GroEL-GroES system forms a nano-cage that allows encapsulation of the non-native substrate proteins and provides a physical environment optimized to promote and accelerate protein folding. In Pyrenomonas salina, this protein is Chaperonin GroEL, chloroplastic.